The chain runs to 386 residues: Synaptotagmin-5 (386 aa).

Residues 1-16 are compositionally biased toward pro residues; the sequence is MFPEPPTLGSPAPKTP. Residues 1-21 are disordered; that stretch reads MFPEPPTLGSPAPKTPPDSSR. The Vesicular segment spans residues 1 to 24; sequence MFPEPPTLGSPAPKTPPDSSRIRQ. The helical transmembrane segment at 25–45 threads the bilayer; the sequence is GAVPAWVLATIVLGSGLLVFS. Over 46–386 the chain is Cytoplasmic; that stretch reads SCFCLYRKRC…PDRARPIPAP (341 aa). C2 domains follow at residues 108–227 and 239–372; these read QLGR…QAWR and KLGD…AQWH. L138, D139, D145, D197, F198, D199, S202, D205, D270, D276, D330, and D332 together coordinate Ca(2+).

The protein belongs to the synaptotagmin family. In terms of assembly, homodimer. Interacts with both alpha- and beta-tubulin. Ca(2+) is required as a cofactor.

It is found in the cytoplasmic vesicle. The protein resides in the secretory vesicle. Its subcellular location is the synaptic vesicle membrane. It localises to the recycling endosome membrane. In terms of biological role, may be involved in Ca(2+)-dependent exocytosis of secretory vesicles through Ca(2+) and phospholipid binding to the C2 domain or may serve as Ca(2+) sensors in the process of vesicular trafficking and exocytosis. Regulates the Ca(2+)-dependent secretion of norepinephrine in PC12 cells. Required for export from the endocytic recycling compartment to the cell surface. The polypeptide is Synaptotagmin-5 (Syt5) (Mus musculus (Mouse)).